The chain runs to 512 residues: Endoglucanase 14 (512 aa).

An N-terminal signal peptide occupies residues 1 to 22 (MLAAAIELVVIATSCMVRDAHG). N-linked (GlcNAc...) asparagine glycosylation occurs at N76. D103 acts as the Nucleophile in catalysis. Residues N192 and N215 are each glycosylated (N-linked (GlcNAc...) asparagine). Residues H433, D484, and E493 contribute to the active site.

This sequence belongs to the glycosyl hydrolase 9 (cellulase E) family.

Its subcellular location is the secreted. It catalyses the reaction Endohydrolysis of (1-&gt;4)-beta-D-glucosidic linkages in cellulose, lichenin and cereal beta-D-glucans.. This chain is Endoglucanase 14, found in Oryza sativa subsp. japonica (Rice).